Reading from the N-terminus, the 192-residue chain is MLVKEREEKLNRVLVALLGIPVVFSIIRAKIVETIGYFIFWLGGFSPYVYEKITHQEIPERTKLMLSSSVFLHSVMGQFLNFYEKIFFWDKILHFYGSFVITYFFYQILTKKSRFWDEVPGAVLMAFLLGVFSGVLWEIAEFTTDKILPDYNTQKGLDDTMLDLIFDLLGCYTMAKIVYRKKTGRFFWRPRS.

2 consecutive transmembrane segments (helical) span residues 31-51 (IVET…YVYE) and 119-139 (VPGA…LWEI).

It is found in the cell membrane. This is an uncharacterized protein from Thermotoga maritima (strain ATCC 43589 / DSM 3109 / JCM 10099 / NBRC 100826 / MSB8).